Consider the following 290-residue polypeptide: Short chain dehydrogenase/reductase nsrO (290 aa).

2 residues coordinate NADP(+): Ile-37 and Lys-149. Catalysis depends on proton donor residues Ser-168 and Tyr-182. NADP(+)-binding residues include Tyr-182, Lys-186, and Thr-221. Residue Lys-186 is the Lowers pKa of active site Tyr of the active site.

The protein belongs to the short-chain dehydrogenases/reductases (SDR) family.

It participates in secondary metabolite biosynthesis. Its function is as follows. Short chain dehydrogenase/reductase; part of the gene cluster that mediates the biosynthesis of the tetrahydroxanthone dimer neosartorin, which exhibits antibacterial activity. The two different monomeric units appear to be synthesized by the same set of enzymes, among which the Baeyer-Villiger monooxygenase nsrF is the key enzyme for the divergence of the biosynthetic routes. The pathway begins with the synthesis of atrochrysone thioester by the polyketide synthase nsrB. The atrochrysone carboxyl ACP thioesterase nsrC then breaks the thioester bond and releases the atrochrysone carboxylic acid from AacuL. Atrochrysone carboxylic acid is decarboxylated by the decarboxylase nsrE, and oxidized by the anthrone oxygenase nsrD to yield emodin. Emodin is then reduced to emodin hydroquinone by the oxidoreductase nsrR. A-ring reduction by the short chain dehydrogenase nsrJ, dehydration by the scytalone dehydratase-like protein nsrI and probable spontaneous re-oxidation, results in overall deoxygenation to chrysophanol. The Baeyer-Villiger monooxygenase nsrF accepts chrysophanol as a substrate to insert one oxygen atom at two different positions to yield the precursors of both monomric units. NsrF is promiscuous/flexible in interacting with the 2 (non methylated and methylated) aromatic rings of chrysophanol, thus diverging the biosynthetic pathway at this point. After the hydrolysis of the lactones, methylesterification by the methyltransferase nsrG yields respectively moniliphenone and 2,2',6'-trihydroxy-4-methyl-6-methoxya-cyldiphenylmethanone. The next steps are the hydroxylation by the FAD-dependent monooxygenase nsrK, followed by isomerization by the monooxygenase nsrQ. The short chain dehydrogenase/reductase nsrO then catalyzes the C-5 ketoreduction to give the xanthone skeleton of blennolide C and 5-acetylblennolide A. The acetyltransferase nsrL has a strict substrate specificity and uses only blennolide A but not blennolide C to yield 5-acetylblennolide A as the single-acetylated product. In the final step of the biosynthesis, the heterodimerization of the 2 xanthones, blennolide C and 5-acetylblennolide A, is catalyzed by the cytochrome P450 monooxygenase nsrP. NsrP can utilize at least three different xanthones as its substrates to perform the dimerization reaction. The polypeptide is Short chain dehydrogenase/reductase nsrO (Aspergillus novofumigatus (strain IBT 16806)).